We begin with the raw amino-acid sequence, 259 residues long: Indole-diterpene biosynthesis cluster protein S (259 aa).

The next 5 helical transmembrane spans lie at 5–25, 64–84, 87–107, 134–154, and 221–241; these read EASG…GMVW, WFAL…AIIL, VYLI…LWVL, VLWF…AASF, and LGAG…PAAG.

This sequence belongs to the ltmS family.

The protein resides in the membrane. In terms of biological role, part of the gene cluster that mediates the biosynthesis of paspalitrems, indole-diterpene (IDT) mycotoxins that are potent tremorgens in mammals. The geranylgeranyl diphosphate (GGPP) synthase idtG is proposed to catalyze the first step in IDT biosynthesis via catalysis of a series of iterative condensations of isopentenyl diphosphate (IPP) with dimethylallyl diphosphate (DMAPP), geranyl diphosphate (GPP), and farnesyl diphosphate (FPP), to form GGPP. Condensation of indole-3-glycerol phosphate with GGPP by the prenyltransferase idtC then forms 3-geranylgeranylindole (3-GGI). Epoxidation of the two terminal alkenes of the geranylgeranyl moiety by the FAD-dependent monooxygenase idtM, and cyclization by the terpene cyclase idtB then leads to the production of paspaline. The cytochrome P450 monooxygenase idtP then catalyzes oxidative elimination of the pendant methyl group at C-12 of paspaline and generates the C-10 ketone to yield 13-desoxypaxilline. The cytochrome P450 monooxygenase idtQ may catalyze the C-13 oxidation of 13-desoxypaxilline to afford paxilline. Considering that both paspalicine and paxilline were detected in C.paspali, idtQ also catalyzes the formation of paspalinine from 13-desoxypaxilline via paspalicine as an intermediate. Finally, the alpha-prenyltransferase idtF prenylates paspalinine at the C-20 or the C-21 positions to yield paspalitrems A and C, respectively. The hydroxylation of paspalitrem A at C-32 by a still unknown oxidase affords paspalitrem B. This chain is Indole-diterpene biosynthesis cluster protein S, found in Claviceps paspali (Rye ergot fungus).